We begin with the raw amino-acid sequence, 393 residues long: Small RNA 2'-O-methyltransferase (393 aa).

S-adenosyl-L-methionine-binding residues include Ser-60, Asp-78, and Ser-114. Positions 132, 135, 136, and 181 each coordinate Mg(2+). The segment at 283-309 (RVSHLPRRKEQDGEQGDKPKDIGGSKA) is disordered. The segment covering 290 to 305 (RKEQDGEQGDKPKDIG) has biased composition (basic and acidic residues).

This sequence belongs to the methyltransferase superfamily. HEN1 family. It depends on Mg(2+) as a cofactor.

Its subcellular location is the cytoplasm. The enzyme catalyses small RNA 3'-end nucleotide + S-adenosyl-L-methionine = small RNA 3'-end 2'-O-methylnucleotide + S-adenosyl-L-homocysteine + H(+). Methyltransferase that adds a 2'-O-methyl group at the 3'-end of piRNAs, a class of 24 to 30 nucleotide RNAs that are generated by a Dicer-independent mechanism and are primarily derived from transposons and other repeated sequence elements. This probably protects the 3'-end of piRNAs from uridylation activity and subsequent degradation. Stabilization of piRNAs is essential for gametogenesis. This Macaca fascicularis (Crab-eating macaque) protein is Small RNA 2'-O-methyltransferase (HENMT1).